The sequence spans 468 residues: Heparan-sulfate 6-O-sulfotransferase 2 (468 aa).

The Cytoplasmic segment spans residues 1–9 (MDGKSNYSR). The helical; Signal-anchor for type II membrane protein transmembrane segment at 10–30 (LLIALLMILFFGGIVLQYICS) threads the bilayer. Over 31-468 (TSDWQLLHLA…DYLENVEQWR (438 aa)) the chain is Lumenal. An N-linked (GlcNAc...) asparagine glycan is attached at N79. 103–111 (HIQKTGGTT) contributes to the 3'-phosphoadenylyl sulfate binding site. Substrate-binding positions include 133–134 (KK), R150, W155, and H160. Catalysis depends on H160, which acts as the Proton acceptor. The 3'-phosphoadenylyl sulfate site is built by R197 and S205. Residues H209 and W216 each coordinate substrate. N276 carries N-linked (GlcNAc...) asparagine glycosylation. Position 329-331 (329-331 (TQL)) interacts with 3'-phosphoadenylyl sulfate. N332 carries an N-linked (GlcNAc...) asparagine glycan. Residue 335-336 (RA) coordinates 3'-phosphoadenylyl sulfate. The interval 409-447 (FKPTKEPPMTEQSPAFAEEKQADAERTLESETEGQVEEN) is disordered. Over residues 425 to 437 (AEEKQADAERTLE) the composition is skewed to basic and acidic residues. The span at 438–447 (SETEGQVEEN) shows a compositional bias: acidic residues.

This sequence belongs to the sulfotransferase 6 family. As to expression, expressed ubiquitously during gastrulation. During early somitogenesis, strong expression in head and presumptive brain. During mid-somitogenesis, strong expression in eye, hindbrain and somitic boundaries and weak expression in tail bud. During late somitogenesis, strong expression in eye, hindbrain, branchial arch primordia, spinal cord and ventral medial somites. At 24 hours post-fertilization (hpf), strong expression throughout the head, with expression receeding from the trunk spinal cord, ventral medial somites and somitic boundaries; expressed in cells surrounding vascular structures of the dorsal aorta and caudal vein in the tail. At 36 hpf, expressed in lens, optic stalk, hindbrain and pectoral fin. At 48 hpf, expressed in eye, brain, otic vesicle and branchial arches.

The protein resides in the membrane. It catalyses the reaction alpha-D-glucosaminyl-[heparan sulfate](n) + 3'-phosphoadenylyl sulfate = 6-sulfo-alpha-D-glucosaminyl-[heparan sulfate](n) + adenosine 3',5'-bisphosphate + H(+). 6-O-sulfation enzyme which catalyzes the transfer of sulfate from 3'-phosphoadenosine 5'-phosphosulfate (PAPS) to position 6 of the N-sulfoglucosamine residue (GlcNS) of heparan sulfate. Required for muscle development and angiogenesis. This chain is Heparan-sulfate 6-O-sulfotransferase 2 (hs6st2), found in Danio rerio (Zebrafish).